Reading from the N-terminus, the 191-residue chain is Gastrokine-3 (191 aa).

Residues 1–30 (MPLHSLERDNMRRLIAPSILVTVFLVPALA) form the signal peptide. A glycan (N-linked (GlcNAc...) asparagine) is linked at Asn33. The 93-residue stretch at 63–155 (NSVQSEWDGV…LCRAVPTYFA (93 aa)) folds into the BRICHOS domain. Cys90 and Cys147 are joined by a disulfide.

This sequence belongs to the gastrokine family. In terms of tissue distribution, expressed in stomach. Present in mucus cells at the base of antral glands, and Brunner glands of the duodenum. Present at lower levels in the mucus neck cell region of the fundus (at protein level).

The protein resides in the secreted. In terms of biological role, inhibits gastric epithelial cell proliferation. This is Gastrokine-3 (Gkn3) from Mus musculus (Mouse).